We begin with the raw amino-acid sequence, 292 residues long: MRMGIISEERDWVTDELKSKMEKNDIDPVIIQPSKIISYIESEVKFEQNNRSILDLKCAFVRNIGEGVEMFHRFDMLKYLENYVPIINPMDGIENAGNKFRTSFLMEVHKIPHPKTIVAEDVNKALIAADKFEDVVLKPLFGNQGKGLVRVKGRSTVAKLKALNTFKSTHGVIYMQEFVNNPNNVYRDIRAFVVGDKVISAMYRTSDNWITNIHQNGVPEKCEITEELSKIVLAAKDAVGLVYAGVDILESSDGLKVIEVNACPSWEGLSRISEVDIAQNLIDEALNYAKEY.

In terms of domain architecture, ATP-grasp spans 103–286 (SFLMEVHKIP…IAQNLIDEAL (184 aa)). ATP is bound by residues Lys138, 176–188 (QEFVNNPNNVYRD), and Arg204. Residues Asp247, Glu259, and Asn261 each contribute to the Mg(2+) site. Mn(2+) contacts are provided by Asp247, Glu259, and Asn261.

It belongs to the RimK family. MptN subfamily. As to quaternary structure, homodimer. Requires Mg(2+) as cofactor. Mn(2+) serves as cofactor.

It catalyses the reaction 5,6,7,8-tetrahydromethanopterin + L-glutamate + ATP = 5,6,7,8-tetrahydrosarcinapterin + ADP + phosphate + H(+). It participates in cofactor biosynthesis; 5,6,7,8-tetrahydrosarcinapterin biosynthesis. Its function is as follows. Catalyzes the ATP or GTP-dependent addition of one L-glutamate molecule to tetrahydromethanopterin, producing tetrahydrosarcinapterin. The sequence is that of Tetrahydromethanopterin:alpha-L-glutamate ligase (mptN) from Methanococcus maripaludis (strain DSM 14266 / JCM 13030 / NBRC 101832 / S2 / LL).